The chain runs to 240 residues: Ribosomal RNA small subunit methyltransferase G (240 aa).

S-adenosyl-L-methionine-binding positions include Gly-80, Phe-85, 103-105 (DSS), 131-132 (AE), and Arg-150.

The protein belongs to the methyltransferase superfamily. RNA methyltransferase RsmG family.

It localises to the cytoplasm. Specifically methylates the N7 position of a guanine in 16S rRNA. In Thermoanaerobacter pseudethanolicus (strain ATCC 33223 / 39E) (Clostridium thermohydrosulfuricum), this protein is Ribosomal RNA small subunit methyltransferase G.